A 1392-amino-acid chain; its full sequence is DNA-directed RNA polymerase subunit beta'' (1392 aa).

Zn(2+)-binding residues include Cys-224, Cys-295, Cys-302, and Cys-305.

The protein belongs to the RNA polymerase beta' chain family. RpoC2 subfamily. In terms of assembly, in plastids the minimal PEP RNA polymerase catalytic core is composed of four subunits: alpha, beta, beta', and beta''. When a (nuclear-encoded) sigma factor is associated with the core the holoenzyme is formed, which can initiate transcription. Zn(2+) is required as a cofactor.

Its subcellular location is the plastid. It is found in the chloroplast. The enzyme catalyses RNA(n) + a ribonucleoside 5'-triphosphate = RNA(n+1) + diphosphate. Its function is as follows. DNA-dependent RNA polymerase catalyzes the transcription of DNA into RNA using the four ribonucleoside triphosphates as substrates. This Nicotiana tomentosiformis (Tobacco) protein is DNA-directed RNA polymerase subunit beta''.